Consider the following 510-residue polypeptide: Ectonucleoside triphosphate diphosphohydrolase 1 (510 aa).

The Cytoplasmic portion of the chain corresponds to 1 to 16 (MEDRRESELKTFCSKN). The helical transmembrane segment at 17–37 (ILVILGFSSIIAVIALLALGL) threads the bilayer. Residues 38 to 477 (TQNKPLPENV…SSTRLSHSTY (440 aa)) lie on the Extracellular side of the membrane. N-linked (GlcNAc...) asparagine glycosylation is present at Asn73. A disulfide bridge connects residues Cys84 and Cys108. Catalysis depends on Glu174, which acts as the Proton acceptor. Residues Asn245, Asn274, Asn291, and Asn333 are each glycosylated (N-linked (GlcNAc...) asparagine). Disulfide bonds link Cys255-Cys300 and Cys281-Cys324. Residues Cys337 and Cys342 are joined by a disulfide bond. An N-linked (GlcNAc...) asparagine glycan is attached at Asn370. A disulfide bond links Cys390 and Cys413. Asn457 is a glycosylation site (N-linked (GlcNAc...) asparagine). A helical membrane pass occupies residues 478-498 (VFLMVLFSLILVIVVIIGLFV). At 499 to 510 (CHRPSYFWKDMV) the chain is on the cytoplasmic side.

This sequence belongs to the GDA1/CD39 NTPase family. Homodimer; disulfide-linked. It depends on Ca(2+) as a cofactor. Mg(2+) serves as cofactor. Post-translationally, N-glycosylated. Cleaved into two polypeptides that seem to stay together by non-covalent interactions. In terms of processing, the N-terminus is blocked. Post-translationally, palmitoylated on Cys-13; which is required for caveola targeting. As to expression, highest expression found in vascular endothelium, smooth muscle, spleen and lung (at protein level). High expression also found in stomach, duodenum, kidney, lymph node and aorta (at protein level).

The protein resides in the membrane. Its subcellular location is the caveola. The catalysed reaction is a ribonucleoside 5'-triphosphate + 2 H2O = a ribonucleoside 5'-phosphate + 2 phosphate + 2 H(+). It carries out the reaction a ribonucleoside 5'-triphosphate + H2O = a ribonucleoside 5'-diphosphate + phosphate + H(+). It catalyses the reaction a ribonucleoside 5'-diphosphate + H2O = a ribonucleoside 5'-phosphate + phosphate + H(+). The enzyme catalyses ATP + 2 H2O = AMP + 2 phosphate + 2 H(+). The catalysed reaction is ATP + H2O = ADP + phosphate + H(+). It carries out the reaction ADP + H2O = AMP + phosphate + H(+). It catalyses the reaction CTP + 2 H2O = CMP + 2 phosphate + 2 H(+). The enzyme catalyses CTP + H2O = CDP + phosphate + H(+). The catalysed reaction is CDP + H2O = CMP + phosphate + H(+). It carries out the reaction GTP + 2 H2O = GMP + 2 phosphate + 2 H(+). It catalyses the reaction GTP + H2O = GDP + phosphate + H(+). The enzyme catalyses GDP + H2O = GMP + phosphate + H(+). The catalysed reaction is ITP + 2 H2O = IMP + 2 phosphate + 2 H(+). It carries out the reaction ITP + H2O = IDP + phosphate + H(+). It catalyses the reaction IDP + H2O = IMP + phosphate + H(+). The enzyme catalyses UTP + 2 H2O = UMP + 2 phosphate + 2 H(+). The catalysed reaction is UTP + H2O = UDP + phosphate + H(+). It carries out the reaction UDP + H2O = UMP + phosphate + H(+). Its activity is regulated as follows. The ATP diphosphohydrolase activity is decreased by half by sodium azide. Functionally, catalyzes the hydrolysis of both di- and triphosphate nucleotides (NDPs and NTPs) and hydrolyze NTPs to nucleotide monophosphates (NMPs) in two distinct successive phosphate-releasing steps, with NDPs as intermediates and participates in the regulation of extracellular levels of nucleotides. By hydrolyzing proinflammatory ATP and platelet-activating ADP to AMP, it blocks platelet aggregation and supports blood flow. The chain is Ectonucleoside triphosphate diphosphohydrolase 1 from Sus scrofa (Pig).